The chain runs to 523 residues: Probable methylmalonate-semialdehyde/malonate-semialdehyde dehydrogenase [acylating], mitochondrial (523 aa).

Residues 1 to 22 constitute a mitochondrion transit peptide; sequence MLSRLARVQPKCQQLAHFSTSK. Residues Phe-175, Lys-199, and Glu-202 each contribute to the NAD(+) site. Cys-307 functions as the Nucleophile in the catalytic mechanism. Position 407 (Glu-407) interacts with NAD(+).

This sequence belongs to the aldehyde dehydrogenase family. Homodimer.

The protein resides in the mitochondrion. The enzyme catalyses 2-methyl-3-oxopropanoate + NAD(+) + CoA + H2O = propanoyl-CoA + hydrogencarbonate + NADH + H(+). It carries out the reaction 3-oxopropanoate + NAD(+) + CoA + H2O = hydrogencarbonate + acetyl-CoA + NADH + H(+). In terms of biological role, probable malonate and methylmalonate semialdehyde dehydrogenase involved in the catabolism of valine, thymine, and compounds catabolized by way of beta-alanine, including uracil and cytidine. This Caenorhabditis elegans protein is Probable methylmalonate-semialdehyde/malonate-semialdehyde dehydrogenase [acylating], mitochondrial (alh-8).